The chain runs to 665 residues: F-box/LRR-repeat protein 3 (665 aa).

The F-box domain maps to 11–60 (KPFDLLSEELVFIILDLISPNPSDLKSFSLTCKSFYQLESKHRGSLKPLR). LRR repeat units follow at residues 61–81 (SDYL…DLTF), 82–108 (CPRV…DLSR), 109–134 (SGSF…DLSN), 135–159 (ATEM…KLGR), 160–185 (CKML…SLKW), 186–211 (CVGV…DLSY), 214–235 (ITGK…LLEG), 236–261 (CFGV…DASS), 262–287 (CQNL…DLSH), 288–312 (CSSV…IRLD), 313–338 (GCSV…SLSK), 339–364 (CVSV…DITC), 365–390 (CRKL…KMES), 391–416 (CSLV…DLTD), 419–440 (IDDE…KLGI), 441–466 (CLNI…DLYR), 467–492 (SVGI…NISY), 493–517 (CQDI…ESRG), 518–543 (CPNI…DLKK), 544–569 (CPSI…NVSD), and 594–619 (SSGL…KLHA).

The sequence is that of F-box/LRR-repeat protein 3 (FBL3) from Arabidopsis thaliana (Mouse-ear cress).